Here is a 759-residue protein sequence, read N- to C-terminus: Solute carrier family 26 member 6 (759 aa).

Topologically, residues 1–115 are cytoplasmic; sequence MGLADASGPR…PQGLAYALLA (115 aa). Residues 116–136 form a helical membrane-spanning segment; that stretch reads GLPPVFGLYSSFYPVFIYFLF. The Extracellular portion of the chain corresponds to 137-186; sequence GTSRHISVGTFAVMSVMVGSVTESLAPQALNDSMINETARDAARVQVAST. Residues Asn167 and Asn172 are each glycosylated (N-linked (GlcNAc) asparagine). The helical transmembrane segment at 187-207 threads the bilayer; it reads LSVLVGLFQVGLGLIHFGFVV. The Cytoplasmic segment spans residues 208-263; it reads TYLSEPLVRGYTTAAAVQVFVSQLKYVFGLHLSSHSGPLSLIYTVLEVCWKLPQSK. The chain crosses the membrane as a helical span at residues 264 to 284; sequence VGTVVTAAVAGVVLVVVKLLN. Topologically, residues 285-293 are extracellular; sequence DKLQQQLPM. Residues 294–314 form a helical membrane-spanning segment; the sequence is PIPGELLTLIGATGISYGMGL. The Cytoplasmic portion of the chain corresponds to 315-347; that stretch reads KHRFEVDVVGNIPAGLVPPVAPNTQLFSKLVGS. The helical transmembrane segment at 348–368 threads the bilayer; it reads AFTIAVVGFAIAISLGKIFAL. The Extracellular portion of the chain corresponds to 369-379; sequence RHGYRVDSNQE. The chain crosses the membrane as a helical span at residues 380 to 400; that stretch reads LVALGLSNLIGGIFQCFPVSC. Topologically, residues 401-416 are cytoplasmic; that stretch reads SMSRSLVQESTGGNSQ. The chain crosses the membrane as a helical span at residues 417–437; it reads VAGAISSLFILLIIVKLGELF. Residues 438 to 484 are Extracellular-facing; it reads HDLPKAVLAAIIIVNLKGMLRQLSDMRSLWKANRADLLIWLVTFTAT. The helical transmembrane segment at 485–505 threads the bilayer; the sequence is ILLNLDLGLVVAVIFSLLLVV. Residues 506-759 lie on the Cytoplasmic side of the membrane; it reads VRTQMPHYSV…PDSPVSVTRL (254 aa). In terms of domain architecture, STAS spans 530–742; it reads EYSEAKEVRG…ASVHDAVTFA (213 aa). 2 positions are modified to phosphoserine; by PKC: Asn553 and Lys582. Ser616 is modified (phosphoserine). Residues 636 to 657 are disordered; the sequence is GDKMEDATANGQEDSKAPDGST. Phosphoserine is present on residues Ser752 and Ser755.

This sequence belongs to the SLC26A/SulP transporter (TC 2.A.53) family. In terms of assembly, interacts (via C-terminal domain) with PDZK1 (via C-terminal PDZ domain); the interaction induces chloride and oxalate exchange transport. Interacts with CFTR and SLC26A3. Interacts with AHCYL1; the interaction increases SLC26A6 activity. Interacts with NHERF1 (via the PDZ domains) and NHERF2 (via the PDZ domains). Interacts (via C-terminal cytoplasmic domain) with CA2; the interaction stimulates chloride-bicarbonate exchange activity. As to quaternary structure, interacts with NHERF1 (via the PDZ domains) and NHERF2 (via the PDZ domains). In terms of processing, phosphorylated on serine residues by PKC; the phosphorylation disrupts interaction with carbonic anhydrase CA2 and reduces bicarbonate transport activity in a phorbol myristate acetate (PMA)-induced manner. Glycosylation at Asn-167 and Asn-172 positively regulates its chloride oxalate exchanger activity. Ubiquitous. Highest levels in kidney and pancreas. Lower expression in heart, skeletal muscle, liver and placenta. Also found in lung and brain. In terms of tissue distribution, ubiquitously expressed. Highest levels expressed in the kidney and pancreas. As to expression, expressed weakly in placenta, lung, liver and pancreas. Expressed in heart, brain, placenta, lung, liver, kidney, pancreas, spleen, thymus, prostate, testis and ovary.

Its subcellular location is the cell membrane. The protein localises to the apical cell membrane. It is found in the cytoplasmic vesicle membrane. The protein resides in the microsome. It localises to the basolateral cell membrane. The catalysed reaction is 2 hydrogencarbonate(in) + chloride(out) = 2 hydrogencarbonate(out) + chloride(in). It carries out the reaction oxalate(in) + chloride(out) = oxalate(out) + chloride(in). It catalyses the reaction oxalate(in) + formate(out) = oxalate(out) + formate(in). The enzyme catalyses oxalate(in) + sulfate(out) = oxalate(out) + sulfate(in). The catalysed reaction is 2 hydrogencarbonate(out) + sulfate(in) = 2 hydrogencarbonate(in) + sulfate(out). Its activity is regulated as follows. Oxalate transport activity is inhibited by 4,4'-diisothiocyanatostilbene-2,2'-disulfonic acid (DIDS). With respect to regulation, chloride, bicarbonate and sulfate transport activities are inhibited by 4,4'-diisothiocyanatostilbene-2,2'-disulfonic acid (DIDS). In terms of biological role, apical membrane anion-exchanger with wide epithelial distribution that plays a role as a component of the pH buffering system for maintaining acid-base homeostasis. Acts as a versatile DIDS-sensitive inorganic and organic anion transporter that mediates the uptake of monovalent anions like chloride, bicarbonate, formate and hydroxyl ion and divalent anions like sulfate and oxalate. Functions in multiple exchange modes involving pairs of these anions, which include chloride-bicarbonate, chloride-oxalate, oxalate-formate, oxalate-sulfate and chloride-formate exchange. Apical membrane chloride-bicarbonate exchanger that mediates luminal chloride absorption and bicarbonate secretion by the small intestinal brush border membrane and contributes to intracellular pH regulation in the duodenal upper villous epithelium during proton-coupled peptide absorption, possibly by providing a bicarbonate import pathway. Also mediates intestinal chloride absorption and oxalate secretion, thereby preventing hyperoxaluria and calcium oxalate urolithiasis. Transepithelial oxalate secretion, chloride-formate, chloride-oxalate and chloride-bicarbonate transport activities in the duodenum are inhibited by PKC activation in a calcium-independent manner. The apical membrane chloride-bicarbonate exchanger also provides a major route for fluid and bicarbonate secretion into the proximal tubules of the kidney as well as into the proximal part of the interlobular pancreatic ductal tree, where it mediates electrogenic chloride-bicarbonate exchange with a chloride-bicarbonate stoichiometry of 1:2, and hence will dilute and alkalinize protein-rich acinar secretion. Also mediates the transcellular sulfate absorption and oxalate secretion across the apical membrane in the duodenum and the formate ion efflux at the apical brush border of cells in the proximal tubules of kidney. Plays a role in sperm capacitation by increasing intracellular pH. Functionally, apical membrane chloride-bicarbonate exchanger. Its association with carbonic anhydrase CA2 forms a bicarbonate transport metabolon; hence maximizes the local concentration of bicarbonate at the transporter site. This is Solute carrier family 26 member 6 (SLC26A6) from Homo sapiens (Human).